Reading from the N-terminus, the 210-residue chain is SAP domain-containing ribonucleoprotein (210 aa).

Ala-2 carries the post-translational modification N-acetylalanine. The SAP domain maps to Leu-8 to Leu-42. Position 10 is an N6-acetyllysine (Lys-10). The segment covering His-45–Glu-64 has biased composition (acidic residues). Positions His-45 to Ala-86 are disordered. The span at Thr-65 to Ala-86 shows a compositional bias: basic and acidic residues. Lys-142 bears the N6-acetyllysine mark. The tract at residues Val-161 to Ala-210 is disordered. Ser-163 is subject to Phosphoserine. Positions Val-184–Thr-193 are enriched in polar residues.

It belongs to the SAP domain-containing ribonucleoprotein family. As to quaternary structure, interacts with DDX39A. Interacts with FUS. Interacts (via the C-terminal domain) with DDX39B; the interaction is direct and facilitates RNA binding of DDX39B. Component of the transcription/export (TREX) complex at least composed of ALYREF/THOC4, DDX39B, SARNP/CIP29, CHTOP and the THO subcomplex; TREX seems to have dynamic structure involving ATP-dependent remodeling; in the complex interacts directly with DDX39B in a ATP-dependent manner which bridges it to ALYREF/THOC4. Low expression in spleen, liver, pancreas, testis, thymus, heart, and kidney. Increased levels are seen in hepatocellular carcinoma and pancreatic adenocarcinoma.

The protein resides in the nucleus. The protein localises to the nucleus speckle. Its function is as follows. Binds both single-stranded and double-stranded DNA with higher affinity for the single-stranded form. Specifically binds to scaffold/matrix attachment region DNA. Also binds single-stranded RNA. Enhances RNA unwinding activity of DDX39A. May participate in important transcriptional or translational control of cell growth, metabolism and carcinogenesis. Component of the TREX complex which is thought to couple mRNA transcription, processing and nuclear export, and specifically associates with spliced mRNA and not with unspliced pre-mRNA. The TREX complex is recruited to spliced mRNAs by a transcription-independent mechanism, binds to mRNA upstream of the exon-junction complex (EJC) and is recruited in a splicing- and cap-dependent manner to a region near the 5' end of the mRNA where it functions in mRNA export to the cytoplasm via the TAP/NXF1 pathway. Associates with DDX39B, which facilitates RNA binding of DDX39B and likely plays a role in mRNA export. This Homo sapiens (Human) protein is SAP domain-containing ribonucleoprotein (SARNP).